Consider the following 223-residue polypeptide: Deoxyribose-phosphate aldolase (223 aa).

The active-site Proton donor/acceptor is the Asp91. The active-site Schiff-base intermediate with acetaldehyde is Lys153. Lys182 (proton donor/acceptor) is an active-site residue.

Belongs to the DeoC/FbaB aldolase family. DeoC type 1 subfamily.

The protein resides in the cytoplasm. The catalysed reaction is 2-deoxy-D-ribose 5-phosphate = D-glyceraldehyde 3-phosphate + acetaldehyde. It participates in carbohydrate degradation; 2-deoxy-D-ribose 1-phosphate degradation; D-glyceraldehyde 3-phosphate and acetaldehyde from 2-deoxy-alpha-D-ribose 1-phosphate: step 2/2. Its function is as follows. Catalyzes a reversible aldol reaction between acetaldehyde and D-glyceraldehyde 3-phosphate to generate 2-deoxy-D-ribose 5-phosphate. This Streptococcus pyogenes serotype M4 (strain MGAS10750) protein is Deoxyribose-phosphate aldolase.